We begin with the raw amino-acid sequence, 118 residues long: Thioredoxin AMT13 (118 aa).

The region spanning 1-110 (MSDNKAIQTL…LEDAIRANLG (110 aa)) is the Thioredoxin domain. Cysteines 36 and 39 form a disulfide.

It belongs to the thioredoxin family.

It participates in mycotoxin biosynthesis. Its function is as follows. Thioredoxin; part of the gene clusters that mediate the biosynthesis of AM-toxins, host-selective toxins (HSTs) causing Alternaria blotch on apple, a worldwide distributed disease. AM-toxins are cyclic depsipeptides containing the 3 residues 2-hydroxy-isovaleric acid (2-HIV), dehydroalanine, L-alanine which are common for all 3 AM-toxins I to III. The fourth precursor is L-alpha-amino-methoxyphenyl-valeric acid (L-Amv) for AM-toxin I, L-alpha-amino-phenyl-valeric acid (L-Apv) for AM-toxin II, and L-alpha-amino-hydroxyphenyl-valeric acid (L-Ahv) for AM-toxin III. AM-toxins have two target sites for affecting susceptible apple cells; they cause invagination of the plasma membrane and electrolyte loss and chloroplast disorganization. The non-ribosomal peptide synthetase AMT1 contains 4 catalytic modules and is responsible for activation of each residue in AM-toxin. The aldo-keto reductase AMT2 catalyzes the conversion of 2-keto-isovaleric acid (2-KIV) to 2-hydroxy-isovaleric acid (2-HIV), one of the precursor residues incorporated by AMT1 during AM-toxin biosynthesis, by reduction of its ketone to an alcohol. The cytochrome P450 monooxygenase AMT3 and the thioesterase AMT4 are also important for AM-toxin production, but their exact function within the AM-toxin biosynthesis are not known yet. Up to 21 proteins (including AMT1 to AMT4) are predicted to be involved in AM-toxin biosynthesis since their expression ishighly up-regulated in AM-toxin-producing cultures. In Alternaria alternata (Alternaria rot fungus), this protein is Thioredoxin AMT13.